The primary structure comprises 110 residues: UPF0060 membrane protein Psyc_0916 (110 aa).

4 helical membrane passes run 7 to 27, 33 to 53, 63 to 83, and 87 to 107; these read VGLF…PYLW, SIWL…LLSL, AAYG…VNGI, and TWDI…MFAP.

Belongs to the UPF0060 family.

Its subcellular location is the cell inner membrane. This is UPF0060 membrane protein Psyc_0916 from Psychrobacter arcticus (strain DSM 17307 / VKM B-2377 / 273-4).